The primary structure comprises 90 residues: Cell division topological specificity factor (90 aa).

Belongs to the MinE family.

In terms of biological role, prevents the cell division inhibition by proteins MinC and MinD at internal division sites while permitting inhibition at polar sites. This ensures cell division at the proper site by restricting the formation of a division septum at the midpoint of the long axis of the cell. This Bordetella avium (strain 197N) protein is Cell division topological specificity factor.